A 556-amino-acid chain; its full sequence is MTMLKDPSQKYRPFTPIALPDRTWPDKVIDRAPIWLSTDLRDGNQSLIEPMDAEKKMRFFKCLVAVGLKEIEVGFPSASQTDFDFVRELIEGGHIPDDVTIQVLTQARDDLIERTFESLKGAKRAIVHYYNACAPSFRKIVFNQDKAGVKAIAVAAGKTIKRLAAAQPDTQWGFEYSPEVFSSTETDFAVEVCNAVIEVFQPTPANKLILNLPATVECATPNNYADQIEWFGRHVDRRDSVLISVHTHNDRGTGVAASELAVMAGADRVEGCLFGNGERTGNVCLVTLALNLYTQGVDPQLDFSDIDAVRKVVEDCNQIPVHPRHPYAGDLVHTAFSGSHQDAIRKGFAQQKDDAVWEVPYLPIDPADIGRDYEAVIRVNSQSGKGGITFLLEQEYGISLPRRMQIEFSQVVQRETDRLGLEMTAAQIYQLLESEYLQASAPYALKGHRLQEENGTSAVDVEVISAGESHHWRGIGKGPLEALVAGLPVAVEIMDYSEHAIGAGTNAKAAAYIELRVNGGRALHGIGIDENLTTASFRALFSALNRALSQAESRAA.

Positions 33–307 (PIWLSTDLRD…DPQLDFSDID (275 aa)) constitute a Pyruvate carboxyltransferase domain. Asp42, His246, His248, and Asn282 together coordinate Mg(2+). A regulatory domain region spans residues 439–556 (ASAPYALKGH…ALSQAESRAA (118 aa)).

It belongs to the alpha-IPM synthase/homocitrate synthase family. LeuA type 2 subfamily. Homodimer. Mg(2+) is required as a cofactor.

The protein localises to the cytoplasm. The enzyme catalyses 3-methyl-2-oxobutanoate + acetyl-CoA + H2O = (2S)-2-isopropylmalate + CoA + H(+). The protein operates within amino-acid biosynthesis; L-leucine biosynthesis; L-leucine from 3-methyl-2-oxobutanoate: step 1/4. Catalyzes the condensation of the acetyl group of acetyl-CoA with 3-methyl-2-oxobutanoate (2-ketoisovalerate) to form 3-carboxy-3-hydroxy-4-methylpentanoate (2-isopropylmalate). This Ectopseudomonas mendocina (strain ymp) (Pseudomonas mendocina) protein is 2-isopropylmalate synthase.